The following is a 97-amino-acid chain: UPF0213 protein YE0453 (97 aa).

The region spanning 4-79 (SLWHLYLLRT…KQLSKQQKEK (76 aa)) is the GIY-YIG domain.

This sequence belongs to the UPF0213 family.

The polypeptide is UPF0213 protein YE0453 (Yersinia enterocolitica serotype O:8 / biotype 1B (strain NCTC 13174 / 8081)).